The sequence spans 440 residues: Xylose isomerase (440 aa).

Catalysis depends on residues histidine 101 and aspartate 104. Mg(2+) contacts are provided by glutamate 232, glutamate 268, histidine 271, aspartate 296, aspartate 307, aspartate 309, and aspartate 339.

This sequence belongs to the xylose isomerase family. As to quaternary structure, homotetramer. Mg(2+) is required as a cofactor.

Its subcellular location is the cytoplasm. It carries out the reaction alpha-D-xylose = alpha-D-xylulofuranose. The protein is Xylose isomerase of Escherichia coli O17:K52:H18 (strain UMN026 / ExPEC).